A 284-amino-acid polypeptide reads, in one-letter code: 2-dehydro-3-deoxyphosphooctonate aldolase (284 aa).

Belongs to the KdsA family.

The protein resides in the cytoplasm. It carries out the reaction D-arabinose 5-phosphate + phosphoenolpyruvate + H2O = 3-deoxy-alpha-D-manno-2-octulosonate-8-phosphate + phosphate. The protein operates within carbohydrate biosynthesis; 3-deoxy-D-manno-octulosonate biosynthesis; 3-deoxy-D-manno-octulosonate from D-ribulose 5-phosphate: step 2/3. It functions in the pathway bacterial outer membrane biogenesis; lipopolysaccharide biosynthesis. The sequence is that of 2-dehydro-3-deoxyphosphooctonate aldolase from Salmonella arizonae (strain ATCC BAA-731 / CDC346-86 / RSK2980).